The chain runs to 209 residues: MIGLIGRKVGMTRVFTEDGVSIPVTVVEVEANRVSQVKTLETDGYAAIQVTTGSKKANRVTKPEAGHFAKAGVEAGRGLWEFRLENGEEFAVGSELTVELFNEVKKVDVTGTSKGKGFQGAVKRWNFRTQDMTHGNSLSHRAPGSIGQCQTPGRVFKGKKMAGHMGAERVTTQNLEIVRVDAERNLLLIKGAVPGATGGNVIVKPAVKA.

Glutamine 150 is modified (N5-methylglutamine).

The protein belongs to the universal ribosomal protein uL3 family. Part of the 50S ribosomal subunit. Forms a cluster with proteins L14 and L19. Methylated by PrmB.

Functionally, one of the primary rRNA binding proteins, it binds directly near the 3'-end of the 23S rRNA, where it nucleates assembly of the 50S subunit. The chain is Large ribosomal subunit protein uL3 from Vibrio cholerae serotype O1 (strain ATCC 39541 / Classical Ogawa 395 / O395).